We begin with the raw amino-acid sequence, 161 residues long: Protein-export protein SecB (161 aa).

This sequence belongs to the SecB family. As to quaternary structure, homotetramer, a dimer of dimers. One homotetramer interacts with 1 SecA dimer.

The protein localises to the cytoplasm. Functionally, one of the proteins required for the normal export of preproteins out of the cell cytoplasm. It is a molecular chaperone that binds to a subset of precursor proteins, maintaining them in a translocation-competent state. It also specifically binds to its receptor SecA. The chain is Protein-export protein SecB from Shewanella sp. (strain MR-7).